A 375-amino-acid chain; its full sequence is 23S rRNA (uracil(747)-C(5))-methyltransferase RlmC (375 aa).

[4Fe-4S] cluster contacts are provided by Cys-3, Cys-11, Cys-14, and Cys-87. Positions 212, 241, 262, and 307 each coordinate S-adenosyl-L-methionine. Catalysis depends on Cys-334, which acts as the Nucleophile.

Belongs to the class I-like SAM-binding methyltransferase superfamily. RNA M5U methyltransferase family. RlmC subfamily.

It carries out the reaction uridine(747) in 23S rRNA + S-adenosyl-L-methionine = 5-methyluridine(747) in 23S rRNA + S-adenosyl-L-homocysteine + H(+). In terms of biological role, catalyzes the formation of 5-methyl-uridine at position 747 (m5U747) in 23S rRNA. In Shigella sonnei (strain Ss046), this protein is 23S rRNA (uracil(747)-C(5))-methyltransferase RlmC.